A 475-amino-acid chain; its full sequence is Lactate utilization protein B (475 aa).

4Fe-4S ferredoxin-type domains follow at residues 304 to 334 and 353 to 382; these read GTEF…GHSY and YEDH…LHEL. [4Fe-4S] cluster contacts are provided by C313, C316, C319, C323, C366, C369, and C373.

The protein belongs to the LutB/YkgF family.

Functionally, is involved in L-lactate degradation and allows cells to grow with lactate as the sole carbon source. Has probably a role as an electron transporter during oxidation of L-lactate. This Shouchella clausii (strain KSM-K16) (Alkalihalobacillus clausii) protein is Lactate utilization protein B.